The sequence spans 402 residues: Iripin-8 (402 aa).

Positions 1–16 (MTRLLWLFAAITASLA) are cleaved as a signal peptide. N-linked (GlcNAc...) asparagine glycans are attached at residues Asn164 and Asn230.

It belongs to the serpin family. In terms of assembly, interacts with host thrombin/F2. Interacts with host coagulation factor VII/F7 (activated). Interacts with host coagulation factor X/F10 (activated). Interacts with host coagulation factor XII/F12 (activated). Interacts with host coagulation factor IX/F9 (activated). Interacts with host plasmin/PLG. Interacts with host protein C/PROC (activated). As to expression, saliva (at protein level). Salivary gland. Midgut. Low-level expression in ovary.

Its subcellular location is the secreted. Its function is as follows. Serine protease inhibitor that modulates blood feeding of ticks on vertebrate species. Inhibits the intrinsic and common pathways of blood coagulation in the host. Inhibits host thrombin, factor VIIa, factor Xa, factor XIa, factor XIIa, plasmin and activated protein C. Inhibits host trypsin and kallikrein. Reduces host complement activity. Does not affect proliferation of CD4+ T-cells and neutrophil migration. This is Iripin-8 from Ixodes ricinus (Common tick).